Here is a 234-residue protein sequence, read N- to C-terminus: MKKIVISLGGSVLVPSLESNNIDRYVSVLKKISGTCRIFVVVGGGGEARRYIGVARSLGAGEAAADELGIMVTRLNARLLIAGLGDAAYPRVAENYTEAQEFAQAGKIVVMGGITPAQTTDAVSAVLAESVGAALLINATSVNGIYSADPKKDAGAVRHERLTPRELLDIITGSRMDAGANTVLDIVAGKVIERSGIPLLVLDGRDPENLYRAIVEGVCVGTVVCEEGSTPLPS.

Gly10 to Ser11 is a binding site for ATP. Gly44 is a UMP binding site. ATP contacts are provided by Gly45 and Arg49. UMP is bound by residues Asp66 and Ile114–Thr120. Positions 140, 146, and 149 each coordinate ATP.

The protein belongs to the UMP kinase family. In terms of assembly, homohexamer.

It is found in the cytoplasm. The enzyme catalyses UMP + ATP = UDP + ADP. The protein operates within pyrimidine metabolism; CTP biosynthesis via de novo pathway; UDP from UMP (UMPK route): step 1/1. With respect to regulation, inhibited by UTP. Its function is as follows. Catalyzes the reversible phosphorylation of UMP to UDP. The polypeptide is Uridylate kinase (Methanoculleus marisnigri (strain ATCC 35101 / DSM 1498 / JR1)).